The chain runs to 335 residues: tRNA N6-adenosine threonylcarbamoyltransferase (335 aa).

Fe cation-binding residues include His-111 and His-115. Substrate-binding positions include 134–138 (LISGG), Asp-167, Gly-180, and Asn-270. Position 298 (Asp-298) interacts with Fe cation.

The protein belongs to the KAE1 / TsaD family. The cofactor is Fe(2+).

It localises to the cytoplasm. The catalysed reaction is L-threonylcarbamoyladenylate + adenosine(37) in tRNA = N(6)-L-threonylcarbamoyladenosine(37) in tRNA + AMP + H(+). Its function is as follows. Required for the formation of a threonylcarbamoyl group on adenosine at position 37 (t(6)A37) in tRNAs that read codons beginning with adenine. Is involved in the transfer of the threonylcarbamoyl moiety of threonylcarbamoyl-AMP (TC-AMP) to the N6 group of A37, together with TsaE and TsaB. TsaD likely plays a direct catalytic role in this reaction. The sequence is that of tRNA N6-adenosine threonylcarbamoyltransferase from Nitrosococcus oceani (strain ATCC 19707 / BCRC 17464 / JCM 30415 / NCIMB 11848 / C-107).